Reading from the N-terminus, the 325-residue chain is Bifunctional ligase/repressor BirA (325 aa).

The segment at residues 23 to 42 (GQKISDALGCSRTAVWKHIE) is a DNA-binding region (H-T-H motif). Positions 74–262 (RFGLKTEVMG…CFEKRYRDYM (189 aa)) constitute a BPL/LPL catalytic domain. Biotin-binding positions include Gln118, 122–124 (RGR), and Lys189.

This sequence belongs to the biotin--protein ligase family.

The enzyme catalyses biotin + L-lysyl-[protein] + ATP = N(6)-biotinyl-L-lysyl-[protein] + AMP + diphosphate + H(+). Acts both as a biotin--[acetyl-CoA-carboxylase] ligase and a repressor. This chain is Bifunctional ligase/repressor BirA, found in Bacillus subtilis (strain 168).